The sequence spans 166 residues: Regulatory protein RecX (166 aa).

The protein belongs to the RecX family.

Its subcellular location is the cytoplasm. Its function is as follows. Modulates RecA activity. This is Regulatory protein RecX from Shigella dysenteriae serotype 1 (strain Sd197).